Consider the following 405-residue polypeptide: L-rhamnonate dehydratase (405 aa).

Substrate contacts are provided by H33 and R59. Mg(2+) contacts are provided by D226, E252, and E280. H329 functions as the Proton acceptor in the catalytic mechanism. Substrate is bound at residue E349.

This sequence belongs to the mandelate racemase/muconate lactonizing enzyme family. RhamD subfamily. Homooctamer; tetramer of dimers. Mg(2+) is required as a cofactor.

It carries out the reaction L-rhamnonate = 2-dehydro-3-deoxy-L-rhamnonate + H2O. In terms of biological role, catalyzes the dehydration of L-rhamnonate to 2-keto-3-deoxy-L-rhamnonate (KDR). Can also dehydrate L-lyxonate and L-mannonate, although less efficiently, but not 2-keto-4-hydroxyheptane-1,7-dioate. The sequence is that of L-rhamnonate dehydratase (rhmD) from Salmonella typhimurium (strain LT2 / SGSC1412 / ATCC 700720).